Reading from the N-terminus, the 117-residue chain is uncharacterized protein (117 aa).

The N-terminal stretch at 1 to 38 (MIIDSSRIPSFTQLHSTMTRAPLLLLCVALVLLGHVNG) is a signal peptide.

It is found in the secreted. This is an uncharacterized protein from Homo sapiens (Human).